The following is an 89-amino-acid chain: Small ribosomal subunit protein uS15 (89 aa).

Belongs to the universal ribosomal protein uS15 family. In terms of assembly, part of the 30S ribosomal subunit. Forms a bridge to the 50S subunit in the 70S ribosome, contacting the 23S rRNA.

Its function is as follows. One of the primary rRNA binding proteins, it binds directly to 16S rRNA where it helps nucleate assembly of the platform of the 30S subunit by binding and bridging several RNA helices of the 16S rRNA. Functionally, forms an intersubunit bridge (bridge B4) with the 23S rRNA of the 50S subunit in the ribosome. The sequence is that of Small ribosomal subunit protein uS15 from Bartonella henselae (strain ATCC 49882 / DSM 28221 / CCUG 30454 / Houston 1) (Rochalimaea henselae).